Reading from the N-terminus, the 289-residue chain is Polyamine aminopropyltransferase (289 aa).

Positions 5 to 245 (PGPITLIEPL…YAVNFILGSL (241 aa)) constitute a PABS domain. Q36 is a binding site for S-methyl-5'-thioadenosine. The spermidine site is built by H67 and E91. S-methyl-5'-thioadenosine-binding positions include D111 and 143–144 (DG). The Proton acceptor role is filled by D164.

This sequence belongs to the spermidine/spermine synthase family. Homodimer or homotetramer.

Its subcellular location is the cytoplasm. It carries out the reaction S-adenosyl 3-(methylsulfanyl)propylamine + putrescine = S-methyl-5'-thioadenosine + spermidine + H(+). The protein operates within amine and polyamine biosynthesis; spermidine biosynthesis; spermidine from putrescine: step 1/1. Catalyzes the irreversible transfer of a propylamine group from the amino donor S-adenosylmethioninamine (decarboxy-AdoMet) to putrescine (1,4-diaminobutane) to yield spermidine. The chain is Polyamine aminopropyltransferase from Pyrobaculum calidifontis (strain DSM 21063 / JCM 11548 / VA1).